Here is a 280-residue protein sequence, read N- to C-terminus: Protein synthesis inhibitor II (280 aa).

Alanine 1 carries the N-acetylalanine modification. Glutamate 174 is an active-site residue.

The protein belongs to the ribosome-inactivating protein family. Type 1 RIP subfamily.

The protein localises to the cytoplasm. The enzyme catalyses Endohydrolysis of the N-glycosidic bond at one specific adenosine on the 28S rRNA.. Functionally, inhibits the elongation phase of protein synthesis. It inactivates fungal ribosomes even more effectively than mammalian ribosomes and is thought to function as a constitutive antifungal agent in plants. This is Protein synthesis inhibitor II (RIP30A) from Hordeum vulgare (Barley).